Reading from the N-terminus, the 203-residue chain is Vexin (203 aa).

Residues 59–70 are compositionally biased toward basic and acidic residues; it reads HRTDRRDGEGRW. Positions 59–101 are disordered; it reads HRTDRRDGEGRWSGRFQNPRLQGPHPAKTPARPVGTSEPKSAN.

The protein belongs to the vexin family.

It localises to the cell membrane. It is found in the nucleus. Functionally, required for neurogenesis in the neural plate and retina. Strongly cooperates with neural bHLH factors to promote neurogenesis. The sequence is that of Vexin from Bos taurus (Bovine).